We begin with the raw amino-acid sequence, 706 residues long: MSATAGTADESGVASAAASADERARAASLARELDEHAYRYYVLDSPTISDAEYDRLMAELAALEERHPDLRTPDSPTQKVAGSYSTLFTPVEHLERMLSLENVFDDDEFHQWAARVARESEVDAWLCELKIDGLAVDLVYEDGYLVRAATRGDGRTGEDITPNIRTLASVPVRLRGPRVPGLLEVRGEVFFPTAKFAELNAGLVAVGGKPFANPRNAAAGSLRQKDPRVTATRPLEMIVHGLGAQRGFEVTSQSAAYARFAELGLPVATHFEVLATVPGVLDYVHRWGDARHDVVHEIDGVVVKVDSFALQRRLGSTSKSPRWAVAYKYPPEEVTTKLRDIRVNVGRTGRVTPFGELEPVLVAGSTVGLATLHNIDEVGRKGVLIGDTVVLRKAGDVIPEIVGPVVDLREGSERAFVMPTRCPECGTELVRPEGEVDIRCPNTVSCPAQLRESIFHFASRGAMDIDGLGYETATALLEAGRVRDIGDIFHLTPESFEGLRGFAQKKIDQILRGVEAARHRPLWRLLVGLSIRHVGPTAARALARELRSLEAIAATSAEDLAAVEGVGPKIAGAVLDWFADERHRDILARIAAGGARLADVGAEEGPRPLDGVTVVITGTLTDWSRDSAKEAVEARGGKVTGSVSRKTTAVVVGADPGASKYDKARSLRIPMLDEAGFAVLLAQGVDAASKLAVPADGPEKAETPVE.

The tract at residues 1-20 is disordered; that stretch reads MSATAGTADESGVASAAASA. Residues 50–54, 99–100, and glutamate 128 each bind NAD(+); these read DAEYD and SL. Lysine 130 (N6-AMP-lysine intermediate) is an active-site residue. The NAD(+) site is built by arginine 151, glutamate 188, lysine 304, and lysine 328. Residues cysteine 422, cysteine 425, cysteine 440, and cysteine 446 each contribute to the Zn(2+) site. A BRCT domain is found at 604-694; the sequence is EGPRPLDGVT…VDAASKLAVP (91 aa).

Belongs to the NAD-dependent DNA ligase family. LigA subfamily. The cofactor is Mg(2+). Mn(2+) is required as a cofactor.

The catalysed reaction is NAD(+) + (deoxyribonucleotide)n-3'-hydroxyl + 5'-phospho-(deoxyribonucleotide)m = (deoxyribonucleotide)n+m + AMP + beta-nicotinamide D-nucleotide.. Its function is as follows. DNA ligase that catalyzes the formation of phosphodiester linkages between 5'-phosphoryl and 3'-hydroxyl groups in double-stranded DNA using NAD as a coenzyme and as the energy source for the reaction. It is essential for DNA replication and repair of damaged DNA. This chain is DNA ligase, found in Frankia casuarinae (strain DSM 45818 / CECT 9043 / HFP020203 / CcI3).